The following is a 347-amino-acid chain: Bombesin receptor-activated protein C6orf89 (347 aa).

Over 1–58 (MDLAANEISIYDKLSETVDLVRQTGHQCGMSEKAIEKFIRQLLEKNEPQRPPPQYPLL) the chain is Cytoplasmic. The chain crosses the membrane as a helical span at residues 59–79 (IVVYKVLATLGLILLTAYFVI). Residues 80 to 347 (QPFSPLAPEP…ICDGTAFSEL (268 aa)) are Extracellular-facing.

As to quaternary structure, homodimer. Interacts with BRS3. Interacts (via N-terminus) with SIN3B. Glycosylated.

It localises to the golgi apparatus membrane. It is found in the midbody. Its subcellular location is the cytoplasm. The protein localises to the nucleus. The protein resides in the nucleolus. In terms of biological role, exhibits histone deacetylase (HDAC) enhancer properties. May play a role in cell cycle progression and wound repair of bronchial epithelial cells. The chain is Bombesin receptor-activated protein C6orf89 (C6orf89) from Homo sapiens (Human).